We begin with the raw amino-acid sequence, 469 residues long: UDP-N-acetylmuramate--L-alanine ligase (469 aa).

120-126 serves as a coordination point for ATP; the sequence is GTHGKTT.

Belongs to the MurCDEF family.

The protein localises to the cytoplasm. It catalyses the reaction UDP-N-acetyl-alpha-D-muramate + L-alanine + ATP = UDP-N-acetyl-alpha-D-muramoyl-L-alanine + ADP + phosphate + H(+). It functions in the pathway cell wall biogenesis; peptidoglycan biosynthesis. Cell wall formation. This chain is UDP-N-acetylmuramate--L-alanine ligase, found in Acetivibrio thermocellus (strain ATCC 27405 / DSM 1237 / JCM 9322 / NBRC 103400 / NCIMB 10682 / NRRL B-4536 / VPI 7372) (Clostridium thermocellum).